We begin with the raw amino-acid sequence, 937 residues long: Leucine--tRNA ligase (937 aa).

The 'HIGH' region signature appears at 34–44 (PYPSGAMHIGH). The 'KMSKS' region motif lies at 609 to 613 (KMSSS).

The protein belongs to the class-I aminoacyl-tRNA synthetase family.

Its subcellular location is the cytoplasm. The enzyme catalyses tRNA(Leu) + L-leucine + ATP = L-leucyl-tRNA(Leu) + AMP + diphosphate. This is Leucine--tRNA ligase from Methanothermobacter thermautotrophicus (strain ATCC 29096 / DSM 1053 / JCM 10044 / NBRC 100330 / Delta H) (Methanobacterium thermoautotrophicum).